The primary structure comprises 84 residues: U4-theraphotoxin-Hhn1ac (84 aa).

The signal sequence occupies residues 1 to 22 (MKVTLIAILTCAAVLVLHTTAA). A propeptide spanning residues 23–47 (EELEESQLMEVGMPDTELAAVDEER) is cleaved from the precursor. Intrachain disulfides connect C51–C65, C55–C76, and C70–C81.

It belongs to the neurotoxin 12 (Hwtx-2) family. 02 (Hwtx-2) subfamily. In terms of tissue distribution, expressed by the venom gland.

The protein resides in the secreted. In terms of biological role, postsynaptic neurotoxin. The protein is U4-theraphotoxin-Hhn1ac of Cyriopagopus hainanus (Chinese bird spider).